A 58-amino-acid chain; its full sequence is Small ribosomal subunit protein bS21 (58 aa).

The tract at residues 27–58 is disordered; that stretch reads GTLQELRKREHYEKPSVKRKRKSEAARKRKKY. Residues 31 to 42 show a composition bias toward basic and acidic residues; the sequence is ELRKREHYEKPS. A compositionally biased stretch (basic residues) spans 43-58; it reads VKRKRKSEAARKRKKY.

It belongs to the bacterial ribosomal protein bS21 family.

The protein is Small ribosomal subunit protein bS21 (rpsU) of Lactococcus lactis subsp. lactis (strain IL1403) (Streptococcus lactis).